The chain runs to 219 residues: Baseplate wedge protein gp11 (219 aa).

As to quaternary structure, homotrimer. The gp11 trimer interacts with gp10 trimer and with the short tail fiber (STF) composed of the gp12 trimer. Part of the baseplate macromolecular complex which consists of gp5, gp5.4, gp27 (central spike complex); gp6, gp25, gp53 (inner baseplate); gp7, gp8 (intermediate baseplate); gp9, gp10, gp11, gp12 (peripheral); gp48 and gp54 (proximal region of the tail tube).

It localises to the virion. In terms of biological role, baseplate protein that is part of the baseplate wedge and that connects the short tail fibers to the baseplate. Involved in the tail assembly. In Enterobacteria phage T4 (Bacteriophage T4), this protein is Baseplate wedge protein gp11 (11).